We begin with the raw amino-acid sequence, 257 residues long: Homeobox protein goosecoid (257 aa).

Positions 160 to 219 (KRRHRTIFTDEQLEALENLFQETKYPDVGTREQLARKVHLREEKVEVWFKNRRAKWRRQK) form a DNA-binding region, homeobox. The tract at residues 213 to 257 (AKWRRQKRSSSEESENAEKWNKTSSSKASPEKREEEGKSDLDSDS) is disordered. Residues 241–257 (SPEKREEEGKSDLDSDS) show a composition bias toward basic and acidic residues.

Belongs to the paired homeobox family. Bicoid subfamily.

It localises to the nucleus. In terms of biological role, regulates chordin (CHRD). May play a role in spatial programing within discrete embryonic fields or lineage compartments during organogenesis. In concert with NKX3-2, plays a role in defining the structural components of the middle ear; required for the development of the entire tympanic ring. Probably involved in the regulatory networks that define neural crest cell fate specification and determine mesoderm cell lineages in mammals. The sequence is that of Homeobox protein goosecoid (GSC) from Pongo pygmaeus (Bornean orangutan).